The primary structure comprises 660 residues: Bifunctional polymyxin resistance protein ArnA (660 aa).

The formyltransferase ArnAFT stretch occupies residues 1-304 (MKTVVFAYHD…MLGLVQGSRL (304 aa)). 86 to 88 (HLI) serves as a coordination point for (6R)-10-formyltetrahydrofolate. Residue histidine 104 is the Proton donor; for formyltransferase activity of the active site. Residues arginine 114 and 136–140 (VKRAD) each bind (6R)-10-formyltetrahydrofolate. The dehydrogenase ArnADH stretch occupies residues 314 to 660 (RRTRVLILGV…RTVDLTDKPS (347 aa)). Residues aspartate 347 and 368 to 369 (DI) each bind NAD(+). UDP-alpha-D-glucuronate contacts are provided by residues alanine 393, tyrosine 398, and 432-433 (TS). The active-site Proton acceptor; for decarboxylase activity is the glutamate 434. UDP-alpha-D-glucuronate contacts are provided by residues arginine 460, asparagine 492, 526–535 (KLIDGGKQKR), and tyrosine 613. Residue arginine 619 is the Proton donor; for decarboxylase activity of the active site.

The protein in the N-terminal section; belongs to the Fmt family. UDP-L-Ara4N formyltransferase subfamily. It in the C-terminal section; belongs to the NAD(P)-dependent epimerase/dehydratase family. UDP-glucuronic acid decarboxylase subfamily. In terms of assembly, homohexamer, formed by a dimer of trimers.

The catalysed reaction is UDP-alpha-D-glucuronate + NAD(+) = UDP-beta-L-threo-pentopyranos-4-ulose + CO2 + NADH. It catalyses the reaction UDP-4-amino-4-deoxy-beta-L-arabinose + (6R)-10-formyltetrahydrofolate = UDP-4-deoxy-4-formamido-beta-L-arabinose + (6S)-5,6,7,8-tetrahydrofolate + H(+). Its pathway is nucleotide-sugar biosynthesis; UDP-4-deoxy-4-formamido-beta-L-arabinose biosynthesis; UDP-4-deoxy-4-formamido-beta-L-arabinose from UDP-alpha-D-glucuronate: step 1/3. It participates in nucleotide-sugar biosynthesis; UDP-4-deoxy-4-formamido-beta-L-arabinose biosynthesis; UDP-4-deoxy-4-formamido-beta-L-arabinose from UDP-alpha-D-glucuronate: step 3/3. It functions in the pathway bacterial outer membrane biogenesis; lipopolysaccharide biosynthesis. In terms of biological role, bifunctional enzyme that catalyzes the oxidative decarboxylation of UDP-glucuronic acid (UDP-GlcUA) to UDP-4-keto-arabinose (UDP-Ara4O) and the addition of a formyl group to UDP-4-amino-4-deoxy-L-arabinose (UDP-L-Ara4N) to form UDP-L-4-formamido-arabinose (UDP-L-Ara4FN). The modified arabinose is attached to lipid A and is required for resistance to polymyxin and cationic antimicrobial peptides. The protein is Bifunctional polymyxin resistance protein ArnA of Shigella flexneri.